The chain runs to 1576 residues: Spermatogenesis-associated protein 31D1 (1576 aa).

The helical transmembrane segment at 29 to 49 (FICLSGLGLFILYLFYVVLTL) threads the bilayer. 5 disordered regions span residues 170-197 (FTLASTPSATPPEDLILSPRPKASPPPP), 542-572 (HESPVLPPPQPLSLPSTQPLPLPQTLPQGQS), 782-801 (KDHLLHGPETSSDKDLRSNS), 952-1033 (SQGD…TDFQ), and 1293-1347 (RVSP…PPPE). Residues 546 to 565 (VLPPPQPLSLPSTQPLPLPQ) show a composition bias toward pro residues. The segment covering 966-980 (RSTFQGEKLGTTSSV) has biased composition (polar residues). Residues 1004-1019 (QFSDTDHDLIETDSKD) show a composition bias toward basic and acidic residues. A compositionally biased stretch (polar residues) spans 1020–1032 (GASTSLRRGTTDF).

It belongs to the SPATA31 family.

It localises to the membrane. Functionally, may play a role in spermatogenesis. The protein is Spermatogenesis-associated protein 31D1 (SPATA31D1) of Homo sapiens (Human).